Consider the following 3396-residue polypeptide: Versican core protein (3396 aa).

The N-terminal stretch at 1–20 is a signal peptide; the sequence is MFINIKSILWMCSTLIVTHA. An Ig-like V-type domain is found at 21 to 146; sequence LHKVKVGKSP…EDTQDTVSLT (126 aa). 5 cysteine pairs are disulfide-bonded: Cys-44-Cys-130, Cys-172-Cys-243, Cys-196-Cys-217, Cys-270-Cys-345, and Cys-294-Cys-315. A glycan (N-linked (GlcNAc...) asparagine) is linked at Asn-57. Link domains are found at residues 150 to 245 and 251 to 347; these read VVFH…YCYV and DVFH…YCFK. An N-linked (GlcNAc...) asparagine glycan is attached at Asn-330. The tract at residues 348–1335 is GAG-alpha (glucosaminoglycan attachment domain); the sequence is PKEATTIDLS…IIEVRENKTG (988 aa). Positions 420–430 are enriched in polar residues; it reads ATKLPTPTGST. Disordered regions lie at residues 420 to 439 and 603 to 622; these read ATKL…MDDY and STTV…MDDW. N-linked (GlcNAc...) asparagine glycosylation occurs at Asn-615. O-linked (Xyl...) (chondroitin sulfate) serine glycosylation is present at Ser-659. 2 N-linked (GlcNAc...) asparagine glycosylation sites follow: Asn-782 and Asn-809. 3 disordered regions span residues 807–829, 1126–1154, and 1277–1316; these read EDNT…LPPA, IGPK…TSSL, and REYF…PAST. Polar residues predominate over residues 811 to 824; it reads TSKPLESTEPSASS. A compositionally biased stretch (low complexity) spans 1143–1154; sequence EGSSTTGFTSSL. 2 N-linked (GlcNAc...) asparagine glycosylation sites follow: Asn-1332 and Asn-1398. The tract at residues 1336-3089 is GAG-beta; the sequence is RMSDLSVIGH…VEGTAIYLPG (1754 aa). Disordered stretches follow at residues 1420 to 1497 and 1510 to 1539; these read VPKD…SGGE and FESG…HTEP. The span at 1422-1433 shows a compositional bias: basic and acidic residues; it reads KDPEAAEARRGQ. 2 N-linked (GlcNAc...) asparagine glycosylation sites follow: Asn-1442 and Asn-1468. The segment covering 1469-1480 has biased composition (low complexity); that stretch reads ESTETTESLEVT. Positions 1517-1538 are enriched in basic and acidic residues; that stretch reads KGAESVTERDTEVGHQAHEHTE. 2 O-linked (Xyl...) (chondroitin sulfate) serine glycosylation sites follow: Ser-1548 and Ser-1631. N-linked (GlcNAc...) asparagine glycosylation is present at Asn-1663. 2 disordered regions span residues 1717–1737 and 1759–1789; these read STTV…TAST and PNVA…MTDS. Over residues 1720-1729 the composition is skewed to basic and acidic residues; the sequence is VEEKKRKEEE. Polar residues predominate over residues 1760–1781; that stretch reads NVATSSDSGTRKSFMSLTTPTQ. N-linked (GlcNAc...) asparagine glycosylation is present at Asn-1898. Ser-1935 and Ser-1959 each carry an O-linked (Xyl...) (chondroitin sulfate) serine glycan. Disordered regions lie at residues 1962 to 1994, 2107 to 2134, and 2168 to 2188; these read AAFR…STMV, RQEI…NSPA, and KEMK…PDAN. Low complexity predominate over residues 1969 to 1978; the sequence is TSPSTVPTSV. The segment covering 2111–2120 has biased composition (acidic residues); that stretch reads ESETTSEEQI. Ser-2116 is modified (phosphoserine; by FAM20C). An N-linked (GlcNAc...) asparagine glycan is attached at Asn-2179. Residues Ser-2247 and Ser-2254 are each glycosylated (O-linked (Xyl...) (chondroitin sulfate) serine). N-linked (GlcNAc...) asparagine glycans are attached at residues Asn-2272, Asn-2280, Asn-2360, Asn-2385, and Asn-2392. Disordered stretches follow at residues 2371–2396, 2445–2473, 2493–2518, and 2598–2617; these read TSRP…ETTT, SATT…EVPS, SEQN…STDG, and DTEV…DDST. Polar residues-rich tracts occupy residues 2445–2461 and 2496–2513; these read SATT…TFVS and NKSS…VSYE. Asn-2496 carries N-linked (GlcNAc...) asparagine glycosylation. Ser-2608 is modified (phosphoserine). Thr-2617 carries the phosphothreonine modification. The N-linked (GlcNAc...) asparagine glycan is linked to Asn-2628. Residues Ser-2722, Ser-2723, and Ser-2767 are each glycosylated (O-linked (Xyl...) (chondroitin sulfate) serine). 2 disordered regions span residues 2834–2856 and 2881–2905; these read GSEA…DVGS and EEYL…EDDG. Over residues 2896–2905 the composition is skewed to basic and acidic residues; sequence TKLEPSEDDG. Asn-2934 is a glycosylation site (N-linked (GlcNAc...) asparagine). Residue Ser-2941 is glycosylated (O-linked (Xyl...) (chondroitin sulfate) serine). Residue Asn-3067 is glycosylated (N-linked (GlcNAc...) asparagine). The EGF-like 1 domain maps to 3089-3125; the sequence is GPDRCKMNPCLNGGTCYPTETSYVCTCVPGYSGDQCE. Intrachain disulfides connect Cys-3093-Cys-3104, Cys-3098-Cys-3113, Cys-3115-Cys-3124, Cys-3131-Cys-3142, Cys-3136-Cys-3151, Cys-3153-Cys-3162, Cys-3169-Cys-3180, Cys-3197-Cys-3289, Cys-3265-Cys-3281, Cys-3296-Cys-3339, and Cys-3325-Cys-3352. One can recognise an EGF-like 2; calcium-binding domain in the interval 3127–3163; the sequence is DFDECHSNPCRNGATCVDGFNTFRCLCLPSYVGALCE. Residues 3176-3290 form the C-type lectin domain; that stretch reads FQGQCYKYFA…CNYHLTYTCK (115 aa). Residues 3294-3354 form the Sushi domain; the sequence is VACGQPPVVE…WAIPKITCMN (61 aa). N-linked (GlcNAc...) asparagine glycans are attached at residues Asn-3369 and Asn-3379. Polar residues predominate over residues 3371 to 3380; the sequence is SSAKDNSINT. Positions 3371 to 3396 are disordered; it reads SSAKDNSINTSKHDHRWSRRWQESRR.

Belongs to the aggrecan/versican proteoglycan family. Interacts with FBLN1. Post-translationally, phosphorylated by FAM20C in the extracellular medium. Proteolytically cleaved by ADAMTS5 and ADAMTS15 in the pericellular matrix surrounding myoblasts, facilitating myoblast contact and fusion which is required for skeletal muscle development and regeneration. In terms of tissue distribution, detected in placenta (at protein level). Detected in cerebrospinal fluid, fibroblasts and urine (at protein level). Expressed in the retina (at protein level). Cerebral white matter and plasma. Isoform V0: Expressed in normal brain, gliomas, medulloblastomas, schwannomas, neurofibromas, and meningiomas. Isoform V1: Expressed in normal brain, gliomas, medulloblastomas, schwannomas, neurofibromas, and meningiomas. Isoform V2: Restricted to normal brain and gliomas. Isoform V3: Found in all these tissues except medulloblastomas.

The protein localises to the secreted. It is found in the extracellular space. It localises to the extracellular matrix. The protein resides in the cell projection. Its subcellular location is the cilium. The protein localises to the photoreceptor outer segment. It is found in the interphotoreceptor matrix. Its function is as follows. May play a role in intercellular signaling and in connecting cells with the extracellular matrix. May take part in the regulation of cell motility, growth and differentiation. Binds hyaluronic acid. The protein is Versican core protein (VCAN) of Homo sapiens (Human).